Consider the following 138-residue polypeptide: Basic phospholipase A2 BP-II (138 aa).

An N-terminal signal peptide occupies residues 1 to 16; it reads MRTLWIMAVLLVGVDG. Cystine bridges form between C42–C132, C44–C60, C59–C112, C65–C138, C66–C105, C73–C98, and C91–C103. G45 and G47 together coordinate Ca(2+). H63 is an active-site residue. Residue D106 is part of the active site.

It belongs to the phospholipase A2 family. Group II subfamily. K49 sub-subfamily. As to quaternary structure, exists as a monomer in both solution and crystal states. In the presence of SDS or probably in the presence of phospholipids, assembles to form SDS-resistant stable oligomers. It depends on Ca(2+) as a cofactor. In terms of tissue distribution, expressed by the venom gland.

Its subcellular location is the secreted. The enzyme catalyses a 1,2-diacyl-sn-glycero-3-phosphocholine + H2O = a 1-acyl-sn-glycero-3-phosphocholine + a fatty acid + H(+). Its function is as follows. Snake venom phospholipase A2 (PLA2) that shows anticoagulant activities, strong myolytic activity, infiltration of polymorphonuclear cells, and edema in stromal tissues. Induces cell death of Jurkat cells in a concentration-dependent manner. Shows a low phospholipase A2 activity. PLA2 catalyzes the calcium-dependent hydrolysis of the 2-acyl groups in 3-sn-phosphoglycerides. The chain is Basic phospholipase A2 BP-II from Protobothrops flavoviridis (Habu).